Reading from the N-terminus, the 300-residue chain is MQQIHPAGQATLLADTRNTLGEGATWCDRTRALYWVDIEGAQLWRCRADGSDLTPWPMPERLACFALTDDPDVLLVGLATHLAFFDLRSGAFTRIVEVEPELPTRLNDGRCDGSGAFVFGMKDEGAEPPRAVGGFYRLNADLTLERLALPPAAIANSIGFSPDGSKMYFCDSLVREIFVCDYRPGGEVANVRPFARLTDPDGDPDGSIVDRDGGLWNAQWGGRRVVRYGPDGVETDRVAVPTAQPSCTALDGEGRLYVTSARVGLSDDALADDPHAGGVFVAQTRHAGMATARFAGTPRG.

3 residues coordinate a divalent metal cation: Glu22, Asn156, and Asp205.

The protein belongs to the SMP-30/CGR1 family. A divalent metal cation serves as cofactor.

The enzyme catalyses L-arabinono-1,4-lactone + H2O = L-arabinonate + H(+). In terms of biological role, catalyzes the cleavage of L-arabino-gamma-lactone to L-arabonate. Is involved in a degradation pathway of L-arabinose that allows A.brasilense to grow on L-arabinose as a sole carbon source. Can also use D-galactono-1,4-lactone as substrate in vitro; however, the enzyme is probably not involved in the metabolism of D-galactose in vivo. This chain is L-arabinolactonase (araB), found in Azospirillum brasilense.